A 233-amino-acid chain; its full sequence is Small ribosomal subunit protein uS3 (233 aa).

In terms of domain architecture, KH type-2 spans 39-107 (VRQYLKKELA…PAQINISEVR (69 aa)).

It belongs to the universal ribosomal protein uS3 family. Part of the 30S ribosomal subunit. Forms a tight complex with proteins S10 and S14.

In terms of biological role, binds the lower part of the 30S subunit head. Binds mRNA in the 70S ribosome, positioning it for translation. This is Small ribosomal subunit protein uS3 from Photorhabdus laumondii subsp. laumondii (strain DSM 15139 / CIP 105565 / TT01) (Photorhabdus luminescens subsp. laumondii).